Reading from the N-terminus, the 113-residue chain is Translation initiation factor IF-1, chloroplastic (113 aa).

The S1-like domain maps to 8–83 (REKKNPREAK…SKGRIIYRLP (76 aa)). Residues 86-113 (DSKRIEDSKDSEDLKDSEDLKDTKDSKD) are disordered.

Belongs to the IF-1 family. As to quaternary structure, component of the 30S ribosomal translation pre-initiation complex which assembles on the 30S ribosome in the order IF-2 and IF-3, IF-1 and N-formylmethionyl-tRNA(fMet); mRNA recruitment can occur at any time during PIC assembly.

It localises to the plastid. The protein localises to the chloroplast. One of the essential components for the initiation of protein synthesis. Stabilizes the binding of IF-2 and IF-3 on the 30S subunit to which N-formylmethionyl-tRNA(fMet) subsequently binds. Helps modulate mRNA selection, yielding the 30S pre-initiation complex (PIC). Upon addition of the 50S ribosomal subunit IF-1, IF-2 and IF-3 are released leaving the mature 70S translation initiation complex. The sequence is that of Translation initiation factor IF-1, chloroplastic from Hordeum vulgare (Barley).